The chain runs to 514 residues: RNA-binding region-containing protein 3 (514 aa).

Residues 1 to 26 form a disordered region; that stretch reads MAGPEPPMPLSRGGPGSASLSPPRGD. S21 is modified (phosphoserine). Residues 27 to 102 enclose the RRM 1 domain; the sequence is RTLLVRHLPA…HTLVVEFAKE (76 aa). Disordered stretches follow at residues 106 to 133, 213 to 282, and 337 to 363; these read VHSP…EKKE, MPLH…VRKK, and ETQP…FGKI. The residue at position 108 (S108) is a Phosphoserine. Positions 115–133 are enriched in basic and acidic residues; the sequence is TEKKKRLDDTVENDKEKKE. Pro residues predominate over residues 217–230; sequence APLPPTSPQPPEEP. Phosphoserine is present on S349. One can recognise an RRM 2 domain in the interval 418–501; the sequence is CRIYVKNLAR…KPMVVQFARS (84 aa).

In terms of assembly, component of the U11/U12 snRNPs that are part of the U12-type spliceosome. Found in a complex with m(7)G-capped U12 snRNA. Interacts with PDCD7.

It localises to the nucleus. In terms of biological role, participates in pre-mRNA U12-dependent splicing, performed by the minor spliceosome which removes U12-type introns. U12-type introns comprises less than 1% of all non-coding sequences. Binds to the 3'-stem-loop of m(7)G-capped U12 snRNA. The polypeptide is RNA-binding region-containing protein 3 (Rnpc3) (Mus musculus (Mouse)).